A 360-amino-acid chain; its full sequence is Peptide chain release factor 1 (360 aa).

The residue at position 235 (Gln-235) is an N5-methylglutamine.

Belongs to the prokaryotic/mitochondrial release factor family. In terms of processing, methylated by PrmC. Methylation increases the termination efficiency of RF1.

It is found in the cytoplasm. In terms of biological role, peptide chain release factor 1 directs the termination of translation in response to the peptide chain termination codons UAG and UAA. This chain is Peptide chain release factor 1, found in Paracidovorax citrulli (strain AAC00-1) (Acidovorax citrulli).